The chain runs to 600 residues: Methylenetetrahydrofolate reductase 2 (600 aa).

Catalysis depends on Glu22, which acts as the Proton donor/acceptor. Residues Glu22–Lys27 and Thr54–Trp55 contribute to the NAD(+) site. Residues Thr54 to Trp55, His84, Arg114 to Asp116, Tyr133 to Ala134, Tyr156, Asp171, and Lys178 contribute to the FAD site. Asp116 contributes to the substrate binding site. Substrate-binding residues include Gln189 and Tyr282.

This sequence belongs to the methylenetetrahydrofolate reductase family. It depends on FAD as a cofactor.

It catalyses the reaction (6S)-5-methyl-5,6,7,8-tetrahydrofolate + NADP(+) = (6R)-5,10-methylene-5,6,7,8-tetrahydrofolate + NADPH + H(+). The protein operates within one-carbon metabolism; tetrahydrofolate interconversion. This Saccharomyces cerevisiae (strain ATCC 204508 / S288c) (Baker's yeast) protein is Methylenetetrahydrofolate reductase 2 (MET13).